A 592-amino-acid polypeptide reads, in one-letter code: Outer spore wall assembly protein SHE10 (592 aa).

A signal peptide spans 1–23 (MRFFKRFLLTLTVFIYTLRYLHC). Coiled coils occupy residues 354 to 385 (ENNI…LYEE) and 448 to 583 (LNQF…KQMG). The span at 507–580 (QSEQEERIKS…EVRKQEEARK (74 aa)) shows a compositional bias: basic and acidic residues. The disordered stretch occupies residues 507–592 (QSEQEERIKS…GSPPPPQQQQ (86 aa)).

Belongs to the SHE10 family. As to quaternary structure, component of the mitochondria-localized RNase mitochondrial RNA-processing (RNase MRP) composed of one single RNA encoded by the NME1 gene and at least 31 proteins. Absent in the nucleus-localized RNase MRP (NuMRP).

It is found in the mitochondrion. Involved in spore wall assembly. May be a component of the mitochondrial RNase MRP (MtMRP), a ribonucleoprotein endoribonuclease involved in the cleaving RNA transcripts to generate primers for DNA replication in mitochondria. This chain is Outer spore wall assembly protein SHE10, found in Vanderwaltozyma polyspora (strain ATCC 22028 / DSM 70294 / BCRC 21397 / CBS 2163 / NBRC 10782 / NRRL Y-8283 / UCD 57-17) (Kluyveromyces polysporus).